A 262-amino-acid chain; its full sequence is tRNA pseudouridine synthase A (262 aa).

The Nucleophile role is filled by aspartate 52. A substrate-binding site is contributed by tyrosine 110.

It belongs to the tRNA pseudouridine synthase TruA family. Homodimer.

It carries out the reaction uridine(38/39/40) in tRNA = pseudouridine(38/39/40) in tRNA. Functionally, formation of pseudouridine at positions 38, 39 and 40 in the anticodon stem and loop of transfer RNAs. The protein is tRNA pseudouridine synthase A of Chromobacterium violaceum (strain ATCC 12472 / DSM 30191 / JCM 1249 / CCUG 213 / NBRC 12614 / NCIMB 9131 / NCTC 9757 / MK).